We begin with the raw amino-acid sequence, 432 residues long: Serine--tRNA ligase (432 aa).

235-237 (TSE) contacts L-serine. Residue 266–268 (RSE) participates in ATP binding. Glu289 serves as a coordination point for L-serine. Residue 353 to 356 (EISS) participates in ATP binding. L-serine is bound at residue Ser388.

Belongs to the class-II aminoacyl-tRNA synthetase family. Type-1 seryl-tRNA synthetase subfamily. In terms of assembly, homodimer. The tRNA molecule binds across the dimer.

The protein localises to the cytoplasm. It carries out the reaction tRNA(Ser) + L-serine + ATP = L-seryl-tRNA(Ser) + AMP + diphosphate + H(+). The enzyme catalyses tRNA(Sec) + L-serine + ATP = L-seryl-tRNA(Sec) + AMP + diphosphate + H(+). Its pathway is aminoacyl-tRNA biosynthesis; selenocysteinyl-tRNA(Sec) biosynthesis; L-seryl-tRNA(Sec) from L-serine and tRNA(Sec): step 1/1. Functionally, catalyzes the attachment of serine to tRNA(Ser). Is also able to aminoacylate tRNA(Sec) with serine, to form the misacylated tRNA L-seryl-tRNA(Sec), which will be further converted into selenocysteinyl-tRNA(Sec). This chain is Serine--tRNA ligase, found in Paraburkholderia phymatum (strain DSM 17167 / CIP 108236 / LMG 21445 / STM815) (Burkholderia phymatum).